Reading from the N-terminus, the 409-residue chain is Glycosyltransferase GtfC (409 aa).

This sequence belongs to the glycosyltransferase 28 family.

It carries out the reaction dTDP-beta-L-vancosamine + devancoaminyl-vancomycin = epivancomycin + dTDP + H(+). The enzyme catalyses chloroorienticin B + dTDP-beta-L-vancosamine = chloroeremomycin + dTDP + H(+). The protein operates within antibiotic biosynthesis; vancomycin biosynthesis. Its function is as follows. Catalyzes the attachment of dTDP-L-4-epi-vancosamine to chloroorienticin B to form chloroeremomycin in the biosynthesis of glycopeptide antibiotic chloroeremomycin, a member of the vancomycin group of antibiotics. Also able to use dTDP-L-4-epi-vancosamine and devancoaminyl-vancomycin (DVV) to create epivancomycin. Acts downstream of GtfA. The chain is Glycosyltransferase GtfC (gtfC) from Amycolatopsis orientalis (Nocardia orientalis).